Reading from the N-terminus, the 460-residue chain is MAKAPKRAFVCNECGADYPRWQGQCSACHAWNTITEVRLAASPMVARNERLSGYAGSAGVAKVQKLSDISLEELPRFSTGFKEFDRVLGGGVVPGSAILIGGNPGAGKSTLLLQTLCKLAQQMKTLYVTGEESLQQVAMRAHRLGLPTDNLNMLSETSIEQICLIAEEEQPKLMVIDSIQVMHMADVQSSPGSVAQVRETAAYLTRFAKTRGVAIVMVGHVTKDGSLAGPKVLEHCIDCSVLLDGDADSRFRTLRSHKNRFGAVNELGVFAMTEQGLREVSNPSAIFLSRGDEVTSGSSVMVVWEGTRPLLVEIQALVDHSMMANPRRVAVGLEQNRLAILLAVLHRHGGLQMADQDVFVNVVGGVKVTETSADLALLLAMVSSLRDRPLPQDLVVFGEVGLAGEIRPVPSGQERISEAAKHGFRRAIVPAANVPKKAPEGMQIFGVKKLSDALSVFDDL.

Residues 11-28 form a C4-type zinc finger; the sequence is CNECGADYPRWQGQCSAC. 102–109 contacts ATP; sequence GNPGAGKS. A RadA KNRFG motif motif is present at residues 258 to 262; sequence KNRFG. Residues 357-460 are lon-protease-like; it reads DVFVNVVGGV…SDALSVFDDL (104 aa).

Belongs to the RecA family. RadA subfamily.

Its function is as follows. DNA-dependent ATPase involved in processing of recombination intermediates, plays a role in repairing DNA breaks. Stimulates the branch migration of RecA-mediated strand transfer reactions, allowing the 3' invading strand to extend heteroduplex DNA faster. Binds ssDNA in the presence of ADP but not other nucleotides, has ATPase activity that is stimulated by ssDNA and various branched DNA structures, but inhibited by SSB. Does not have RecA's homology-searching function. Genetic experiments involving combination of radA mutations with mutations in recA, recB, recG, recJ, recQ, ruvA and ruvC show it plays a role in recombination and recombinational repair, probably involving stabilizing or processing branched DNA or blocked replication forks. Is genetically synergistic to RecG and RuvABC. May be involved in recovery of genetic rearrangements during replication fork breakdown. In combination with RadD is important in recovery from double-strand DNA breaks (DSB). The protein is DNA repair protein RadA of Escherichia coli (strain K12).